We begin with the raw amino-acid sequence, 503 residues long: ATP synthase subunit alpha (503 aa).

169–176 contributes to the ATP binding site; sequence GDRSTGKT.

This sequence belongs to the ATPase alpha/beta chains family. In terms of assembly, F-type ATPases have 2 components, CF(1) - the catalytic core - and CF(0) - the membrane proton channel. CF(1) has five subunits: alpha(3), beta(3), gamma(1), delta(1), epsilon(1). CF(0) has three main subunits: a(1), b(2) and c(9-12). The alpha and beta chains form an alternating ring which encloses part of the gamma chain. CF(1) is attached to CF(0) by a central stalk formed by the gamma and epsilon chains, while a peripheral stalk is formed by the delta and b chains.

The protein resides in the cell membrane. It carries out the reaction ATP + H2O + 4 H(+)(in) = ADP + phosphate + 5 H(+)(out). Functionally, produces ATP from ADP in the presence of a proton gradient across the membrane. The alpha chain is a regulatory subunit. This chain is ATP synthase subunit alpha, found in Dehalococcoides mccartyi (strain ATCC BAA-2100 / JCM 16839 / KCTC 5957 / BAV1).